Consider the following 343-residue polypeptide: Dihydroorotate dehydrogenase (quinone) (343 aa).

FMN contacts are provided by residues 61–65 (AGLDK) and T85. Substrate is bound at residue K65. Residue 110-114 (NRMGF) coordinates substrate. FMN contacts are provided by N138 and N171. N171 is a substrate binding site. The active-site Nucleophile is S174. N176 is a substrate binding site. FMN-binding residues include K216 and T244. Position 245-246 (245-246 (NT)) interacts with substrate. FMN-binding positions include G267, G296, and 317-318 (YS).

This sequence belongs to the dihydroorotate dehydrogenase family. Type 2 subfamily. In terms of assembly, monomer. FMN is required as a cofactor.

The protein localises to the cell membrane. It carries out the reaction (S)-dihydroorotate + a quinone = orotate + a quinol. It functions in the pathway pyrimidine metabolism; UMP biosynthesis via de novo pathway; orotate from (S)-dihydroorotate (quinone route): step 1/1. In terms of biological role, catalyzes the conversion of dihydroorotate to orotate with quinone as electron acceptor. This chain is Dihydroorotate dehydrogenase (quinone), found in Pseudomonas syringae pv. syringae (strain B728a).